The chain runs to 133 residues: Ribosome-binding factor A (133 aa).

Belongs to the RbfA family. In terms of assembly, monomer. Binds 30S ribosomal subunits, but not 50S ribosomal subunits or 70S ribosomes.

It is found in the cytoplasm. In terms of biological role, one of several proteins that assist in the late maturation steps of the functional core of the 30S ribosomal subunit. Associates with free 30S ribosomal subunits (but not with 30S subunits that are part of 70S ribosomes or polysomes). Required for efficient processing of 16S rRNA. May interact with the 5'-terminal helix region of 16S rRNA. The polypeptide is Ribosome-binding factor A (Chelativorans sp. (strain BNC1)).